The sequence spans 298 residues: N-acetylmuramic acid 6-phosphate etherase (298 aa).

The 164-residue stretch at 55–218 folds into the SIS domain; the sequence is IHTQVSGGGR…STGLMIKSGK (164 aa). E83 serves as the catalytic Proton donor. E114 is a catalytic residue.

Belongs to the GCKR-like family. MurNAc-6-P etherase subfamily. As to quaternary structure, homodimer.

The enzyme catalyses N-acetyl-D-muramate 6-phosphate + H2O = N-acetyl-D-glucosamine 6-phosphate + (R)-lactate. The protein operates within amino-sugar metabolism; 1,6-anhydro-N-acetylmuramate degradation. It participates in amino-sugar metabolism; N-acetylmuramate degradation. It functions in the pathway cell wall biogenesis; peptidoglycan recycling. Its function is as follows. Specifically catalyzes the cleavage of the D-lactyl ether substituent of MurNAc 6-phosphate, producing GlcNAc 6-phosphate and D-lactate. Together with AnmK, is also required for the utilization of anhydro-N-acetylmuramic acid (anhMurNAc) either imported from the medium or derived from its own cell wall murein, and thus plays a role in cell wall recycling. The polypeptide is N-acetylmuramic acid 6-phosphate etherase (Escherichia coli O127:H6 (strain E2348/69 / EPEC)).